The following is a 289-amino-acid chain: Nodulation protein NolT (289 aa).

An N-terminal signal peptide occupies residues 1–33 (MFGSAHGDTTSSDTSGRRPLRLVVLPLLLALSS). The N-palmitoyl cysteine moiety is linked to residue cysteine 34. Cysteine 34 is lipidated: S-diacylglycerol cysteine. A helical transmembrane segment spans residues 233–253 (VAVGVSAAVFAVTCYLLFIVL).

Belongs to the YscJ lipoprotein family.

It localises to the cell outer membrane. The sequence is that of Nodulation protein NolT (nolT) from Sinorhizobium fredii (strain NBRC 101917 / NGR234).